The chain runs to 533 residues: Lymphocyte cytosolic protein 2 (533 aa).

An SAM domain is found at 15–81 (WDPDSLADYF…INKNEERRSI (67 aa)). At tyrosine 23 the chain carries Phosphotyrosine. The interval 78–417 (RRSIFTRKPQ…PPSPAEEENS (340 aa)) is disordered. Acidic residues predominate over residues 108–155 (FEEDDYESPNDDQDGEDDGDYESPNEEEEAPVEDDADYEPPPSNDEEA). Residues 184 to 213 (QQPPVPPQRPMAALPPPPAGRNHSPLPPPQ) are compositionally biased toward pro residues. At serine 207 the chain carries Phosphoserine. 2 stretches are compositionally biased toward polar residues: residues 337 to 350 (MSSNTFPSRSTKPS) and 365 to 376 (SESNSSFPQSAS). 2 positions are modified to phosphoserine: serine 376 and serine 410. Over residues 400–411 (LPLPNKPRPPSP) the composition is skewed to pro residues. One can recognise an SH2 domain in the interval 422–530 (WYVSYITRPE…RYQCTLTHAA (109 aa)).

In terms of assembly, interacts with SLA. Interacts with CBLB. Interacts with GRB2. Interacts with SHB. Interacts with PRAM1. Interacts (via SH2 domain) with CD6 (via tyrosine phosphorylated C-terminus). Interacts with FYB1 and the phosphorylated form of FYB2. Interacts with 14-3-3 adapter/YWHAZ; this phosphorylation leads to YWHAZ proteolytic degradation. Interacts with VAV1; this interaction plays a role in TCR-mediated cytokine production. Interacts with AGER; this interaction plays an important role in AGER-mediated pro-inflammatory responses and cytokine release. Post-translationally, phosphorylated after T-cell receptor activation by ZAP70, ITK and TXK, which leads to the up-regulation of Th1 preferred cytokine IL-2. SYK-dependent phosphorylation is required for recruitment of PI3K signaling components. In terms of tissue distribution, highly expressed in spleen, thymus and peripheral blood leukocytes. Highly expressed also in T-cell and monocytic cell lines, expressed at lower level in B-cell lines. Not detected in fibroblast or neuroblastoma cell lines.

Its subcellular location is the cytoplasm. Its function is as follows. Adapter protein primarily involved in signaling pathways within T-cells, as well as other immune cells such as platelets, mast cells, and natural killer (NK) cells. Plays a crucial role for transducing signal from the T-cell receptor (TCR) after antigen recognition leading to T-cell activation. Mechanistically, once phosphorylated by the kinase ZAP70, mediates interactions with the guanine-nucleotide exchange factor VAV1, the adapter protein NCK and the kinase ITK. In turn, stimulates the activation of PKC-theta/PRKCQ and NF-kappa-B transcriptional activity in response to CD3 and CD28 costimulation. Also plays an essential role in AGER-induced signaling pathways including p38 MAPK and ERK1/2 activation leading to cytokine release and pro-inflammatory responses. This Homo sapiens (Human) protein is Lymphocyte cytosolic protein 2 (LCP2).